A 463-amino-acid polypeptide reads, in one-letter code: SPARC-related modular calcium-binding protein 1 (463 aa).

The first 25 residues, 1-25 (MLPARVRLLTPHLLLVLVQLSPAGG), serve as a signal peptide directing secretion. The region spanning 36–88 (SDRDPPCNPHCPRTQPKPICASDGRSYESMCEYQRAKCRDPALAVVHRGRCKD) is the Kazal-like domain. 6 disulfides stabilise this stretch: Cys42/Cys73, Cys46/Cys66, Cys55/Cys86, Cys94/Cys117, Cys128/Cys135, and Cys137/Cys157. The Thyroglobulin type-1 1 domain occupies 91–157 (QSKCRLERAQ…SSVQNKTPVC (67 aa)). N-linked (GlcNAc...) asparagine glycosylation is present at Asn224. Residues 234–302 (VHSCDQERQS…TSTRYVMPSC (69 aa)) enclose the Thyroglobulin type-1 2 domain. 3 disulfides stabilise this stretch: Cys237–Cys261, Cys272–Cys279, and Cys281–Cys302. EF-hand domains lie at 369-404 (LEERVAHWYFSQLDSNSSDDINKREMKPFKRYVKKK) and 406-441 (KPKKCARRFTDYCDLNKDKVISLPELKGCLGVSKEG). Ca(2+) contacts are provided by Asp382, Asn384, Ser386, Asp388, Glu393, Asp419, Asn421, Asp423, and Glu430. N-linked (GlcNAc...) asparagine glycosylation occurs at Asn384.

In terms of processing, glycosylated. As to expression, widely expressed in many tissues with a strongest signal in ovary.

The protein resides in the secreted. It localises to the extracellular space. It is found in the extracellular matrix. Its subcellular location is the basement membrane. In terms of biological role, probable regulator of osteoblast differentiation. Plays essential roles in both eye and limb development. This chain is SPARC-related modular calcium-binding protein 1 (Smoc1), found in Mus musculus (Mouse).